Reading from the N-terminus, the 343-residue chain is Phenylalanine--tRNA ligase alpha subunit (343 aa).

Residue Glu264 participates in Mg(2+) binding.

It belongs to the class-II aminoacyl-tRNA synthetase family. Phe-tRNA synthetase alpha subunit type 1 subfamily. In terms of assembly, tetramer of two alpha and two beta subunits. Mg(2+) serves as cofactor.

Its subcellular location is the cytoplasm. The enzyme catalyses tRNA(Phe) + L-phenylalanine + ATP = L-phenylalanyl-tRNA(Phe) + AMP + diphosphate + H(+). This Azoarcus sp. (strain BH72) protein is Phenylalanine--tRNA ligase alpha subunit.